Here is a 90-residue protein sequence, read N- to C-terminus: UPF0297 protein LVIS_1222 (90 aa).

Belongs to the UPF0297 family.

This chain is UPF0297 protein LVIS_1222, found in Levilactobacillus brevis (strain ATCC 367 / BCRC 12310 / CIP 105137 / JCM 1170 / LMG 11437 / NCIMB 947 / NCTC 947) (Lactobacillus brevis).